Consider the following 715-residue polypeptide: Palmitoyltransferase ZDHHC5 (715 aa).

Topologically, residues 1-13 (MPAESGKRFKPSK) are cytoplasmic. Residues 14 to 34 (YVPVSAAAIFLVGATTLFFAF) form a helical membrane-spanning segment. Topologically, residues 35–38 (TCPG) are extracellular. Residues 39-59 (LSLYVSPAVPIYNAIMFLFVL) form a helical membrane-spanning segment. Residues 60–148 (ANFSMATFMD…NCIGRRNYRY (89 aa)) lie on the Cytoplasmic side of the membrane. Y91 is modified (phosphotyrosine; by LYN). Positions 104 to 154 (KWCATCRFYRPPRCSHCSVCDNCVEEFDHHCPWVNNCIGRRNYRYFFLFLL) constitute a DHHC domain. C134 serves as the catalytic S-palmitoyl cysteine intermediate. A helical membrane pass occupies residues 149–169 (FFLFLLSLTAHIMGVFGFGLL). The Extracellular portion of the chain corresponds to 170 to 191 (YVLYHIEELSGVRTAVTMAVMC). A helical transmembrane segment spans residues 192–212 (VAGLFFIPVAGLTGFHVVLVA). The Cytoplasmic segment spans residues 213-715 (RGRTTNEQVT…VGGTTYEISV (503 aa)). At S247 the chain carries Phosphoserine. The tract at residues 289–715 (GELRRTKSKG…VGGTTYEISV (427 aa)) is disordered. T294 bears the Phosphothreonine mark. A phosphoserine mark is found at S296 and S299. T303 carries the phosphothreonine modification. A Phosphoserine modification is found at S345. Phosphothreonine is present on residues T348 and T350. Positions 359-373 (SSSSTSAAMPHSSSA) are enriched in low complexity. Phosphoserine is present on residues S380, S398, S406, and S409. Residue T411 is modified to Phosphothreonine. Residues S415, S425, S429, and S432 each carry the phosphoserine modification. Positions 422-432 (SSGSRSSSLKS) are enriched in low complexity. Phosphothreonine is present on T436. The span at 442 to 478 (QLQSIRSEGTTSTSYKSLANQTRNGSLSYDSLLTPSD) shows a compositional bias: polar residues. S529 is subject to Phosphoserine. Residue Y533 is modified to Phosphotyrosine; by FYN. At S554 the chain carries Phosphoserine. The residue at position 617 (R617) is an Omega-N-methylarginine. S621 bears the Phosphoserine mark. T659 is subject to Phosphothreonine. The segment covering 666 to 677 (LKTTYSKSNGQP) has biased composition (polar residues). Residues S684 and S694 each carry the phosphoserine modification. Omega-N-methylarginine is present on R697.

This sequence belongs to the DHHC palmitoyltransferase family. ERF2/ZDHHC9 subfamily. Post-translationally, phosphorylation regulates association with endocytic proteins and its subcellular localization. Phosphorylation by LYN during fatty acid uptake leads to inactivation of the activity. In terms of processing, autopalmitoylated. Palmitoylation of the C-terminal tail regulates stimulation-dependent plasma membrane motility.

It is found in the cell membrane. Its subcellular location is the synapse. It carries out the reaction L-cysteinyl-[protein] + hexadecanoyl-CoA = S-hexadecanoyl-L-cysteinyl-[protein] + CoA. Functionally, palmitoyltransferase that catalyzes the addition of palmitate onto various protein substrates such as CTNND2, CD36, GSDMD, NLRP3, NOD1, NOD2, STAT3 and S1PR1 thus plays a role in various biological processes including cell adhesion, inflammation, fatty acid uptake, bacterial sensing or cardiac functions. Plays an important role in the regulation of synapse efficacy by mediating palmitoylation of delta-catenin/CTNND2, thereby increasing synaptic delivery and surface stabilization of alpha-amino-3-hydroxy-5-methyl-4-isoxazole propionic acid receptors (AMPARs). Under basal conditions, remains at the synaptic membrane through FYN-mediated phosphorylation that prevents association with endocytic proteins. Neuronal activity enhances the internalization and trafficking of DHHC5 from spines to dendritic shafts where it palmitoylates delta-catenin/CTNND2. Regulates cell adhesion at the plasma membrane by palmitoylating GOLGA7B and DSG2. Plays a role in innate immune response by mediating the palmitoylation of NOD1 and NOD2 and their proper recruitment to the bacterial entry site and phagosomes. Also participates in fatty acid uptake by palmitoylating CD36 and thereby targeting it to the plasma membrane. Upon binding of fatty acids to CD36, gets phosphorylated by LYN leading to inactivation and subsequent CD36 caveolar endocytosis. Controls oligodendrocyte development by catalyzing STAT3 palmitoylation. Acts as a regulator of inflammatory response by mediating palmitoylation of NLRP3 and GSDMD. Palmitoylates NLRP3 to promote inflammasome assembly and activation. Activates pyroptosis by catalyzing palmitoylation of gasdermin-D (GSDMD), thereby promoting membrane translocation and pore formation of GSDMD. The sequence is that of Palmitoyltransferase ZDHHC5 from Homo sapiens (Human).